We begin with the raw amino-acid sequence, 476 residues long: Glycogen synthase (476 aa).

Lys15 provides a ligand contact to ADP-alpha-D-glucose.

Belongs to the glycosyltransferase 1 family. Bacterial/plant glycogen synthase subfamily.

The enzyme catalyses [(1-&gt;4)-alpha-D-glucosyl](n) + ADP-alpha-D-glucose = [(1-&gt;4)-alpha-D-glucosyl](n+1) + ADP + H(+). It functions in the pathway glycan biosynthesis; glycogen biosynthesis. Synthesizes alpha-1,4-glucan chains using ADP-glucose. This chain is Glycogen synthase, found in Leptospira biflexa serovar Patoc (strain Patoc 1 / Ames).